The chain runs to 406 residues: Exodeoxyribonuclease 7 large subunit (406 aa).

This sequence belongs to the XseA family. Heterooligomer composed of large and small subunits.

It is found in the cytoplasm. The catalysed reaction is Exonucleolytic cleavage in either 5'- to 3'- or 3'- to 5'-direction to yield nucleoside 5'-phosphates.. Bidirectionally degrades single-stranded DNA into large acid-insoluble oligonucleotides, which are then degraded further into small acid-soluble oligonucleotides. This is Exodeoxyribonuclease 7 large subunit from Desulforudis audaxviator (strain MP104C).